We begin with the raw amino-acid sequence, 134 residues long: Prefoldin subunit alpha (134 aa).

It belongs to the prefoldin subunit alpha family. As to quaternary structure, heterohexamer of two alpha and four beta subunits.

The protein resides in the cytoplasm. Its function is as follows. Molecular chaperone capable of stabilizing a range of proteins. Seems to fulfill an ATP-independent, HSP70-like function in archaeal de novo protein folding. The chain is Prefoldin subunit alpha from Pyrobaculum calidifontis (strain DSM 21063 / JCM 11548 / VA1).